A 703-amino-acid chain; its full sequence is Heat shock protein 75 kDa, mitochondrial (703 aa).

Residues 1–56 (MARELRMLLLWGRRLRAPALAAACGGKPVLCPWRPPAQSWGPPRSLASSFHVGRPF) constitute a mitochondrion transit peptide. Residues Asn118 and Asp157 each contribute to the ATP site. The residue at position 169 (Ser169) is a Phosphoserine. Residue Asn170 coordinates ATP. Thr173 is modified (phosphothreonine). Phe204 and Arg401 together coordinate ATP. N6-acetyllysine occurs at positions 423, 430, and 465. Thr493 carries the phosphothreonine modification.

It belongs to the heat shock protein 90 family. As to quaternary structure, binds to the intracellular domain of tumor necrosis factor type 1 receptor. Binds to RB1. Interacts with SRC. Interacts with SDHA.

It localises to the mitochondrion. The protein resides in the mitochondrion inner membrane. Its subcellular location is the mitochondrion matrix. In terms of biological role, chaperone that expresses an ATPase activity. Involved in maintaining mitochondrial function and polarization, downstream of PINK1 and mitochondrial complex I. Is a negative regulator of mitochondrial respiration able to modulate the balance between oxidative phosphorylation and aerobic glycolysis. The impact of TRAP1 on mitochondrial respiration is probably mediated by modulation of mitochondrial SRC and inhibition of SDHA. This Bos taurus (Bovine) protein is Heat shock protein 75 kDa, mitochondrial (TRAP1).